Consider the following 225-residue polypeptide: Putative tyrosine-protein phosphatase OCA1 (225 aa).

Acidic residues predominate over residues 1–11 (MTDNCREDDDN). Positions 1–24 (MTDNCREDDDNLGTSGDNALSAPT) are disordered. Polar residues predominate over residues 12–24 (LGTSGDNALSAPT). A Tyrosine-protein phosphatase domain is found at 42–196 (NFCPVERYLY…FDTKSVTIDK (155 aa)). Cysteine 138 functions as the Phosphocysteine intermediate in the catalytic mechanism.

The protein belongs to the protein-tyrosine phosphatase family.

The protein resides in the cytoplasm. It carries out the reaction O-phospho-L-tyrosyl-[protein] + H2O = L-tyrosyl-[protein] + phosphate. In terms of biological role, putative tyrosine-protein phosphatase required for protection against superoxide stress. The chain is Putative tyrosine-protein phosphatase OCA1 (OCA1) from Eremothecium gossypii (strain ATCC 10895 / CBS 109.51 / FGSC 9923 / NRRL Y-1056) (Yeast).